The following is a 366-amino-acid chain: Protein FAM110B (366 aa).

Disordered stretches follow at residues 127–150, 163–182, and 214–253; these read SSEG…HRDT, KVYP…HVSR, and IPCS…PSLQ. 2 positions are modified to phosphoserine: Ser234 and Ser297. A disordered region spans residues 313-333; that stretch reads DCEQSQDSNSDLRNDDSANDR. The segment covering 322–331 has biased composition (basic and acidic residues); it reads SDLRNDDSAN.

This sequence belongs to the FAM110 family.

The protein resides in the cytoplasm. It is found in the cytoskeleton. It localises to the microtubule organizing center. The protein localises to the centrosome. The sequence is that of Protein FAM110B (Fam110b) from Rattus norvegicus (Rat).